We begin with the raw amino-acid sequence, 487 residues long: Glutamate--tRNA ligase (487 aa).

Residues 11–21 (PSPTGYPHLGN) carry the 'HIGH' region motif. Residues Cys108, Cys110, Cys135, and Asp137 each contribute to the Zn(2+) site. Positions 245-249 (KLSKR) match the 'KMSKS' region motif. Lys248 provides a ligand contact to ATP.

This sequence belongs to the class-I aminoacyl-tRNA synthetase family. Glutamate--tRNA ligase type 1 subfamily. In terms of assembly, monomer. The cofactor is Zn(2+).

It localises to the cytoplasm. The enzyme catalyses tRNA(Glu) + L-glutamate + ATP = L-glutamyl-tRNA(Glu) + AMP + diphosphate. In terms of biological role, catalyzes the attachment of glutamate to tRNA(Glu) in a two-step reaction: glutamate is first activated by ATP to form Glu-AMP and then transferred to the acceptor end of tRNA(Glu). This Dehalococcoides mccartyi (strain CBDB1) protein is Glutamate--tRNA ligase.